The chain runs to 344 residues: MENPSLISLKKISRCFNTTTDICALDNLSLNIHAGEILGIIGRSGAGKSTLIRCLNGLERIDAGSIFFEGVNVSNLSETEWAPYRQRIGMIFQHFNLLSSQNILNNIALPLKLTGINKKQRHKRALELIELVGLCGKEYCYPAELSGGQKQRVGIARSLAANPKILLSDEATSALDPETTQSILELLADINKRLNLTIVLITHEMEVVRAIAHRVVVLNQGRIVEEGRVKDIFTSPQDDTTIAMLKLVTPQLPEKFAKNLKPRGQEAIIEINIAGEITQQPFLNLLEDEIGLRARILHGGIDTVQGETIGRLFLGLPAQNQEALKKAVQWLTEKGRYCEVLGYV.

An ABC transporter domain is found at 7–245; the sequence is ISLKKISRCF…PQDDTTIAML (239 aa). 42–49 contacts ATP; the sequence is GRSGAGKS.

It belongs to the ABC transporter superfamily. Methionine importer (TC 3.A.1.24) family. The complex is composed of two ATP-binding proteins (MetN), two transmembrane proteins (MetI) and a solute-binding protein (MetQ).

Its subcellular location is the cell inner membrane. The enzyme catalyses L-methionine(out) + ATP + H2O = L-methionine(in) + ADP + phosphate + H(+). It catalyses the reaction D-methionine(out) + ATP + H2O = D-methionine(in) + ADP + phosphate + H(+). Functionally, part of the ABC transporter complex MetNIQ involved in methionine import. Responsible for energy coupling to the transport system. This Bartonella henselae (strain ATCC 49882 / DSM 28221 / CCUG 30454 / Houston 1) (Rochalimaea henselae) protein is Methionine import ATP-binding protein MetN.